The primary structure comprises 563 residues: Protein NOXP20 (563 aa).

The interval 1 to 84 (MSDDAGDTLA…ANALEPPLNG (84 aa)) is disordered. Low complexity predominate over residues 56–68 (AAVQGAGAAAIGP). Residue serine 120 is modified to Phosphoserine. Positions 165-206 (VNSGSSEGAQPNTENGVPEITDAATDQGPAESPPTSPSSASR) are disordered. Polar residues predominate over residues 166 to 179 (NSGSSEGAQPNTEN). Phosphothreonine is present on residues threonine 185 and threonine 189. Serine 196 bears the Phosphoserine mark. Threonine 199 is subject to Phosphothreonine. Phosphoserine occurs at positions 202 and 261. Positions 343 to 367 (AAKELENEENQEEQGLEEKGEEFAR) form a coiled coil. Residues 411 to 436 (SEEETKKEEKEEKSQDPQEDKKEEKK) are disordered.

It belongs to the FAM114 family.

The protein resides in the cytoplasm. Functionally, may play a role in neuronal cell development. The sequence is that of Protein NOXP20 (FAM114A1) from Homo sapiens (Human).